The sequence spans 557 residues: Urocanate hydratase (557 aa).

Positions 1-20 (MSNPRHNEREVRSPRGDELN) are disordered. NAD(+)-binding positions include 52–53 (GG), glutamine 130, 176–178 (GMG), glutamate 196, arginine 201, 242–243 (NA), 263–267 (QTSAH), 273–274 (YL), and tyrosine 322. Cysteine 410 is an active-site residue. Residue glycine 492 coordinates NAD(+).

Belongs to the urocanase family. The cofactor is NAD(+).

The protein localises to the cytoplasm. It carries out the reaction 4-imidazolone-5-propanoate = trans-urocanate + H2O. It functions in the pathway amino-acid degradation; L-histidine degradation into L-glutamate; N-formimidoyl-L-glutamate from L-histidine: step 2/3. Its function is as follows. Catalyzes the conversion of urocanate to 4-imidazolone-5-propionate. This Brucella anthropi (strain ATCC 49188 / DSM 6882 / CCUG 24695 / JCM 21032 / LMG 3331 / NBRC 15819 / NCTC 12168 / Alc 37) (Ochrobactrum anthropi) protein is Urocanate hydratase.